A 693-amino-acid chain; its full sequence is Polyribonucleotide nucleotidyltransferase (693 aa).

2 residues coordinate Mg(2+): Asp-485 and Asp-491. A KH domain is found at 552 to 611; sequence PRIMVLEINPSKIGDLIGPSGKNIKKIIEETHTTINIKPEGLVYISAPDQESAEKAAQMV. One can recognise an S1 motif domain in the interval 621–691; it reads GDIFLGKVIR…SSGRISLTRK (71 aa).

Belongs to the polyribonucleotide nucleotidyltransferase family. Mg(2+) is required as a cofactor.

It localises to the cytoplasm. The enzyme catalyses RNA(n+1) + phosphate = RNA(n) + a ribonucleoside 5'-diphosphate. Involved in mRNA degradation. Catalyzes the phosphorolysis of single-stranded polyribonucleotides processively in the 3'- to 5'-direction. This Dictyoglomus thermophilum (strain ATCC 35947 / DSM 3960 / H-6-12) protein is Polyribonucleotide nucleotidyltransferase.